The sequence spans 1403 residues: DNA-directed RNA polymerase subunit beta' (1403 aa).

Zn(2+) is bound by residues cysteine 69, cysteine 71, cysteine 84, and cysteine 87. Residues aspartate 461, aspartate 463, and aspartate 465 each contribute to the Mg(2+) site. 4 residues coordinate Zn(2+): cysteine 818, cysteine 891, cysteine 898, and cysteine 901. Positions 1384-1403 are disordered; the sequence is LELLRNEGEDETGNEELVAE. The segment covering 1391-1403 has biased composition (acidic residues); the sequence is GEDETGNEELVAE.

This sequence belongs to the RNA polymerase beta' chain family. In terms of assembly, the RNAP catalytic core consists of 2 alpha, 1 beta, 1 beta' and 1 omega subunit. When a sigma factor is associated with the core the holoenzyme is formed, which can initiate transcription. It depends on Mg(2+) as a cofactor. The cofactor is Zn(2+).

The enzyme catalyses RNA(n) + a ribonucleoside 5'-triphosphate = RNA(n+1) + diphosphate. In terms of biological role, DNA-dependent RNA polymerase catalyzes the transcription of DNA into RNA using the four ribonucleoside triphosphates as substrates. In Koribacter versatilis (strain Ellin345), this protein is DNA-directed RNA polymerase subunit beta'.